The chain runs to 751 residues: Nibrin (751 aa).

Residues 24–83 enclose the FHA domain; sequence YVVGRKNCGILIENDQSISRNHAVLTVNFPVTSLSQTDEIPTLTIKDNSKYGTFVNEEKM. 2 consecutive BRCT domains span residues 105-181 and 224-315; these read KFRV…SEFL and GKTF…LAVI. Residues 111–328 are mediates interaction with SP100; it reads EPLVVCSSCL…TENYCNPQGQ (218 aa). Positions 221–403 are interaction with MTOR, MAPKAP1 and RICTOR; the sequence is IFKGKTFVFL…SRKLSQETFN (183 aa). Position 337 is a phosphothreonine (Thr-337). Phosphoserine; by ATM is present on Ser-343. Phosphoserine occurs at positions 347 and 398. Residues 389–418 are disordered; that stretch reads GLEQSSRKLSQETFNIKEAPKPSSKANNVA. At Ser-433 the chain carries Phosphoserine; by CDK2. Lys-436 participates in a covalent cross-link: Glycyl lysine isopeptide (Lys-Gly) (interchain with G-Cter in ubiquitin). Disordered stretches follow at residues 444 to 479 and 491 to 550; these read KDWTSQQQQNSIKNYFQPCTRKRERDEDNPELSSCK and EQTQ…RKRK. Over residues 446-457 the composition is skewed to polar residues; it reads WTSQQQQNSIKN. The Nuclear localization signal signature appears at 461-467; the sequence is PCTRKRE. 2 stretches are compositionally biased toward basic and acidic residues: residues 502 to 518 and 528 to 539; these read KSKEHQSQNATLDREAD and ELNRKSPDRKPL. Ser-508 carries the phosphoserine modification. Glycyl lysine isopeptide (Lys-Gly) (interchain with G-Cter in SUMO2) cross-links involve residues Lys-569 and Lys-580. Residues 576–645 form a disordered region; sequence VKVEKQEADD…ANSDGLQDSS (70 aa). 2 stretches are compositionally biased toward basic and acidic residues: residues 577–599 and 615–636; these read KVEKQEADDTIRKKPRMDAERNR and EDEREKKDELQTESWSTKHEIA. Residues Lys-684, Lys-688, and Lys-733 each participate in a glycyl lysine isopeptide (Lys-Gly) (interchain with G-Cter in ubiquitin) cross-link. Basic and acidic residues predominate over residues 731 to 742; that stretch reads QAKEESLADDLF. A disordered region spans residues 731-751; it reads QAKEESLADDLFRYNPNVKRR. Positions 738 to 747 match the FxF/Y motif motif; that stretch reads ADDLFRYNPN.

The protein belongs to the Nibrin family. As to quaternary structure, component of the MRN complex composed of two heterodimers RAD50 and MRE11 associated with a single NBN. The MRN complexes dimerize on DNA to form joined MRN-MRN oligomers required for DNA double-strand break repair. As part of the MRN complex, interacts with MCM9; the interaction recruits the complex to DNA repair sites. Component of the BASC complex, at least composed of BRCA1, MSH2, MSH6, MLH1, ATM, BLM, RAD50, MRE11 and NBN. Interacts with histone H2AX; this requires phosphorylation of H2AX on 'Ser-139' and promotes NBN recruitment to DNA damage sites. Interacts with (phosphorylated) MDC1; promoting NBN recruitment to DNA damage sites. Interacts with (phosphorylated) RAD17; promoting NBN recruitment to DNA damage sites. Interacts (via FxF/Y motif) with ATM. Interacts with HJURP. Interacts with INTS3. Interacts with KPNA2. Interacts with TERF2; interaction is disrupted upon NBN phosphorylation by CDK2. Interacts with (phosphorylated) RBBP8/CtIP; the interaction links the role of the MRN complex in DNA double-strand break sensing to resection. Interacts with SP100; recruits NBN to PML bodies. Interacts with ATF2. Interacts with MTOR, MAPKAP1 isoform 2 and RICTOR; indicative for an association with the mTORC2 complex. Interacts with MRNIP. Interacts with UFL1; promoting UFL1 recruitment to double-strand breaks following DNA damage. Interacts with CYREN (via XLF motif). In terms of processing, ubiquitinated at Lys-436 via 'Lys-6'-linked ubiquitin chains by RNF8, promoting NBN recruitment to DNA double-strand breaks (DSBs). Ubiquitinated at Lys-684 and Lys-688 via 'Lys-63'-linked ubiquitin chains by PELI1: ubiquitination takes place following PELI1 phosphorylation and promotes ATM activation and DNA repair. Ubiquitinated at Lys-733 via 'Lys-63'-linked ubiquitin chains by the SCF(SKP2) complex: ubiquitination takes place following SKP2 phosphorylation and promotes ATM activation and DNA repair. Phosphorylated by ATM in response of ionizing radiation, and such phosphorylation is responsible intra-S phase checkpoint control and telomere maintenance. Phosphorylated at Ser-433 by CDK2 in S/G2 phases abolishes interaction with TERF2, enabling DCLRE1B/Apollo recruitment to telomeres. Phosphorylation at Ser-433 in response to dysfunctional telomeres promotes non-homologous end joining repair at telomeres, while dephosphorylation by PPP1CA promotes microhomology-mediated end-joining (MMEJ) repair. High expression in the liver, heart and testis. Low expression in all other tissues analyzed. In the cerebellum the postmitotic Purkinje cells are marked specifically.

The protein resides in the nucleus. Its subcellular location is the chromosome. It localises to the PML body. The protein localises to the telomere. Functionally, component of the MRN complex, which plays a central role in double-strand break (DSB) repair, DNA recombination, maintenance of telomere integrity and meiosis. The MRN complex is involved in the repair of DNA double-strand breaks (DSBs) via homologous recombination (HR), an error-free mechanism which primarily occurs during S and G2 phases. The complex (1) mediates the end resection of damaged DNA, which generates proper single-stranded DNA, a key initial steps in HR, and is (2) required for the recruitment of other repair factors and efficient activation of ATM and ATR upon DNA damage. The MRN complex possesses single-strand endonuclease activity and double-strand-specific 3'-5' exonuclease activity, which are provided by MRE11, to initiate end resection, which is required for single-strand invasion and recombination. Within the MRN complex, NBN acts as a protein-protein adapter, which specifically recognizes and binds phosphorylated proteins, promoting their recruitment to DNA damage sites. Recruits MRE11 and RAD50 components of the MRN complex to DSBs in response to DNA damage. Promotes the recruitment of PI3/PI4-kinase family members ATM, ATR, and probably DNA-PKcs to the DNA damage sites, activating their functions. Mediates the recruitment of phosphorylated RBBP8/CtIP to DSBs, leading to cooperation between the MRN complex and RBBP8/CtIP to initiate end resection. RBBP8/CtIP specifically promotes the endonuclease activity of the MRN complex to clear DNA ends containing protein adducts. The MRN complex is also required for the processing of R-loops. NBN also functions in telomere length maintenance via its interaction with TERF2: interaction with TERF2 during G1 phase preventing recruitment of DCLRE1B/Apollo to telomeres. NBN also promotes DNA repair choice at dysfunctional telomeres: NBN phosphorylation by CDK2 promotes non-homologous end joining repair at telomeres, while unphosphorylated NBN promotes microhomology-mediated end-joining (MMEJ) repair. Enhances AKT1 phosphorylation possibly by association with the mTORC2 complex. The protein is Nibrin of Mus musculus (Mouse).